Consider the following 260-residue polypeptide: Proteasome subunit alpha (260 aa).

Low complexity predominate over residues 237–248 (ASTDAPAAAADS). A disordered region spans residues 237–260 (ASTDAPAAAADSADVEERPDSEAP). A compositionally biased stretch (basic and acidic residues) spans 251–260 (VEERPDSEAP).

Belongs to the peptidase T1A family. As to quaternary structure, the 20S proteasome core is composed of 14 alpha and 14 beta subunits that assemble into four stacked heptameric rings, resulting in a barrel-shaped structure. The two inner rings, each composed of seven catalytic beta subunits, are sandwiched by two outer rings, each composed of seven alpha subunits. The catalytic chamber with the active sites is on the inside of the barrel. Has a gated structure, the ends of the cylinder being occluded by the N-termini of the alpha-subunits. Is capped by the proteasome-associated ATPase, ARC.

Its subcellular location is the cytoplasm. Its pathway is protein degradation; proteasomal Pup-dependent pathway. Its activity is regulated as follows. The formation of the proteasomal ATPase ARC-20S proteasome complex, likely via the docking of the C-termini of ARC into the intersubunit pockets in the alpha-rings, may trigger opening of the gate for substrate entry. Interconversion between the open-gate and close-gate conformations leads to a dynamic regulation of the 20S proteasome proteolysis activity. In terms of biological role, component of the proteasome core, a large protease complex with broad specificity involved in protein degradation. This Salinispora tropica (strain ATCC BAA-916 / DSM 44818 / JCM 13857 / NBRC 105044 / CNB-440) protein is Proteasome subunit alpha.